Reading from the N-terminus, the 67-residue chain is Prokaryotic ubiquitin-like protein Pup (67 aa).

A disordered region spans residues 1–26; that stretch reads MATKETGGQKHATRRNQEVEEIEVTT. Residues 23–61 form an ARC ATPase binding region; it reads EVTTETSVRNEKLAEDVDDILDEIDEVLESNAEDFVRQF. The stretch at 27-55 forms a coiled coil; it reads ETSVRNEKLAEDVDDILDEIDEVLESNAE. Glu67 is covalently cross-linked (Isoglutamyl lysine isopeptide (Glu-Lys) (interchain with K-? in acceptor proteins)).

The protein belongs to the prokaryotic ubiquitin-like protein family. In terms of assembly, strongly interacts with the proteasome-associated ATPase ARC through a hydrophobic interface; the interacting region of Pup lies in its C-terminal half. There is one Pup binding site per ARC hexamer ring.

It participates in protein degradation; proteasomal Pup-dependent pathway. Protein modifier that is covalently attached to lysine residues of substrate proteins, thereby targeting them for proteasomal degradation. The tagging system is termed pupylation. This is Prokaryotic ubiquitin-like protein Pup from Thermobifida fusca (strain YX).